A 572-amino-acid polypeptide reads, in one-letter code: MLGLLTITSVFRNWRNSLQRKEDYDECHMRGINNENEISGKSEKNFKLDEPPISLETVMAEFKLSNETLRRMMAHMSRNMDKGLEGGPENSTISMLPSFVPELPNGTEEGRFIAMDLGGTNLRVMLMDIKPGEELKTEQFNTRIPNWAMRGTGEQLFDYITKCLAEFLIEKGIENDGLPVGFTFSYPCDQKSLRSATLLRWTKGFETTGVVGEDVVELLEQSIARRGDIKVEVVALINDTVGTMVAAAHESGGECHIGVIIATGTNASYMEDTSKIKYGLSKAIAAYNYPEMIIDTEWGGFGDRSEADYILTQYDKIVDSRSEHPGVNTFDKLVGGKCMGEVVRVVLEKLTRARVLFNGKGSDALFQQDSFPTKYISEILRDESGSYVHTRDILGELGIDHYSFSDMLLLREVCVVVSRRSANLGAAAIACVLNRVRKQNMVVGIDGSTYKYHPFFDFWVHDKLKELVDPGLKFKLLQTADGSGKGAALITAIVARLKKRNLKQQQQQQQQQQQHVTMVEQNVVEQIAETKGSREQFMNGNQKINLVTNDIPIYDSFNGDIENGVIHLSTDH.

Positions 49 to 492 (DEPPISLETV…SGKGAALITA (444 aa)) constitute a Hexokinase domain. Residues 105 to 237 (NGTEEGRFIA…DIKVEVVALI (133 aa)) are hexokinase small subdomain. D-glucose 6-phosphate-binding positions include 116-120 (DLGGT) and Ser-185. 116-121 (DLGGTN) is a binding site for ATP. Residues 185–186 (SY), 202–203 (TK), and 238–239 (ND) contribute to the substrate site. Positions 238-481 (NDTVGTMVAA…LKFKLLQTAD (244 aa)) are hexokinase large subdomain. The D-glucose 6-phosphate site is built by Asp-239 and Thr-263. Thr-263 lines the ATP pocket. Substrate is bound by residues Asn-266, Glu-297, and Asp-331. Residues 336–337 (GK), 373–377 (TKYIS), and 448–452 (STYKY) each bind ATP. D-glucose 6-phosphate-binding positions include 446-448 (DGS) and Ser-483.

Belongs to the hexokinase family.

It carries out the reaction a D-hexose + ATP = a D-hexose 6-phosphate + ADP + H(+). The enzyme catalyses D-mannose + ATP = D-mannose 6-phosphate + ADP + H(+). The catalysed reaction is D-fructose + ATP = D-fructose 6-phosphate + ADP + H(+). It catalyses the reaction D-glucose + ATP = D-glucose 6-phosphate + ADP + H(+). It participates in carbohydrate metabolism; hexose metabolism. The protein operates within carbohydrate degradation; glycolysis; D-glyceraldehyde 3-phosphate and glycerone phosphate from D-glucose: step 1/4. Activated by glucose-6-phosphate. Inhibited by N-acetylglucosamine, glucosamine, mannoheptulose and ADP. Its function is as follows. Active against glucose, fructose, mannose, maltose and galactose. The chain is Hexokinase from Brugia malayi (Filarial nematode worm).